Reading from the N-terminus, the 447-residue chain is D-ribitol-5-phosphate cytidylyltransferase (447 aa).

This sequence belongs to the IspD/TarI cytidylyltransferase family. IspD subfamily. As to quaternary structure, homodimer.

The protein localises to the cytoplasm. It localises to the cytosol. It carries out the reaction D-ribitol 5-phosphate + CTP + H(+) = CDP-L-ribitol + diphosphate. It catalyses the reaction D-ribose 5-phosphate + CTP + H(+) = CDP-D-ribose + diphosphate. The enzyme catalyses D-ribulose 5-phosphate + CTP + H(+) = CDP-D-ribulose + diphosphate. The protein operates within protein modification; protein glycosylation. Its function is as follows. Cytidylyltransferase required for protein O-linked mannosylation. Catalyzes the formation of CDP-ribitol nucleotide sugar from D-ribitol 5-phosphate. CDP-ribitol is a substrate of FKTN during the biosynthesis of the phosphorylated O-mannosyl trisaccharide (N-acetylgalactosamine-beta-3-N-acetylglucosamine-beta-4-(phosphate-6-)mannose), a carbohydrate structure present in alpha-dystroglycan (DAG1), which is required for binding laminin G-like domain-containing extracellular proteins with high affinity. Shows activity toward other pentose phosphate sugars and mediates formation of CDP-ribulose or CDP-ribose using CTP and ribulose-5-phosphate or ribose-5-phosphate, respectively. Not involved in dolichol production. This is D-ribitol-5-phosphate cytidylyltransferase (Crppa) from Rattus norvegicus (Rat).